The sequence spans 125 residues: Small ribosomal subunit protein eS8 (125 aa).

The segment at 1 to 35 (MQWQGRSVRKPSGGRYHTSQGKKRTEIGRAPAETH) is disordered.

This sequence belongs to the eukaryotic ribosomal protein eS8 family. Part of the 30S ribosomal subunit.

The chain is Small ribosomal subunit protein eS8 from Methanoculleus marisnigri (strain ATCC 35101 / DSM 1498 / JR1).